A 161-amino-acid chain; its full sequence is Cyclic pyranopterin monophosphate synthase (161 aa).

Substrate is bound by residues 78–80 (LCH) and 116–117 (ME). Asp-131 is a catalytic residue.

It belongs to the MoaC family. As to quaternary structure, homohexamer; trimer of dimers.

The catalysed reaction is (8S)-3',8-cyclo-7,8-dihydroguanosine 5'-triphosphate = cyclic pyranopterin phosphate + diphosphate. It participates in cofactor biosynthesis; molybdopterin biosynthesis. In terms of biological role, catalyzes the conversion of (8S)-3',8-cyclo-7,8-dihydroguanosine 5'-triphosphate to cyclic pyranopterin monophosphate (cPMP). In Bordetella pertussis (strain Tohama I / ATCC BAA-589 / NCTC 13251), this protein is Cyclic pyranopterin monophosphate synthase.